The following is a 263-amino-acid chain: uncharacterized protein (263 aa).

ATP is bound at residue 12–19 (KGGVGKTT).

It belongs to the ParA family. MinD subfamily.

This is an uncharacterized protein from Methanocaldococcus jannaschii (strain ATCC 43067 / DSM 2661 / JAL-1 / JCM 10045 / NBRC 100440) (Methanococcus jannaschii).